A 631-amino-acid polypeptide reads, in one-letter code: Shootin-1 (631 aa).

Met1 carries the post-translational modification N-acetylmethionine. A phosphoserine mark is found at Ser3 and Ser4. Positions 7-353 (EKQLQLITSL…RVNQSENSVP (347 aa)) form a coiled coil. Phosphoserine; by PAK1 is present on Ser101. Ser249 is modified (phosphoserine). The disordered stretch occupies residues 343–511 (KRVNQSENSV…SESKSMPVLG (169 aa)). Positions 352-369 (VPPPPPPPPPLPPPPPNP) are enriched in pro residues. At Ser375 the chain carries Phosphoserine. Residues 403 to 418 (TDLKRQAVEEMMDRIK) are compositionally biased toward basic and acidic residues. Polar residues predominate over residues 456 to 465 (LNKSTSSRSL). Ser473 bears the Phosphoserine mark. The residue at position 487 (Thr487) is a Phosphothreonine. Polar residues predominate over residues 490-505 (ADSSSPTGILATSESK). Ser494 carries the post-translational modification Phosphoserine. Thr496 bears the Phosphothreonine mark. Phosphoserine is present on residues Ser506, Ser515, Ser532, and Ser534. 2 disordered regions span residues 524–566 (KTLE…IGCR) and 579–631 (VVVL…SSNC). Thr537 is subject to Phosphothreonine. The span at 550–561 (CTSSKVTFQPPS) shows a compositional bias: polar residues. The segment covering 590-631 (PQTKDQVAEKDPTQHKEDEGEIQPENKEDSIENVRETDSSNC) has biased composition (basic and acidic residues).

Belongs to the shootin family. In terms of assembly, interacts with L1CAM; this interaction occurs in axonal growth cones. Interacts with actin filament retrograde flow; this interaction is enhanced in a netrin-1- and PAK1-dependent manner and promotes F-actin-substrate coupling and concomitant formation of traction forces at axonal growth cones. Interacts with RUFY3. Interacts with PFN2. Interacts (via N-terminus) with KIF20B; this interaction is direct and promotes the association of SHTN1 to microtubules in primary neurons. Associates with microtubule. Post-translationally, phosphorylated on Ser-101 and Ser-249 by PAK1 through a CDC42- and RAC1-dependent signaling pathway, which enhances its association with F-actin retrograde flow in filopodia and lamellipodia of axonal growth cones. Phosphorylation on Ser-101 and Ser-249 is increased by netrin-1.

The protein localises to the perikaryon. It localises to the cell projection. It is found in the axon. Its subcellular location is the growth cone. The protein resides in the cytoplasm. The protein localises to the cytoskeleton. It localises to the filopodium. It is found in the lamellipodium. Functionally, involved in the generation of internal asymmetric signals required for neuronal polarization and neurite outgrowth. Mediates netrin-1-induced F-actin-substrate coupling or 'clutch engagement' within the axon growth cone through activation of CDC42, RAC1 and PAK1-dependent signaling pathway, thereby converting the F-actin retrograde flow into traction forces, concomitantly with filopodium extension and axon outgrowth. Plays a role in cytoskeletal organization by regulating the subcellular localization of phosphoinositide 3-kinase (PI3K) activity at the axonal growth cone. Also plays a role in regenerative neurite outgrowth. In the developing cortex, cooperates with KIF20B to promote both the transition from the multipolar to the bipolar stage and the radial migration of cortical neurons from the ventricular zone toward the superficial layer of the neocortex. Involved in the accumulation of phosphatidylinositol 3,4,5-trisphosphate (PIP3) in the growth cone of primary hippocampal neurons. The polypeptide is Shootin-1 (Homo sapiens (Human)).